A 100-amino-acid chain; its full sequence is Urease subunit gamma (100 aa).

The protein belongs to the urease gamma subunit family. Heterotrimer of UreA (gamma), UreB (beta) and UreC (alpha) subunits. Three heterotrimers associate to form the active enzyme.

The protein localises to the cytoplasm. It carries out the reaction urea + 2 H2O + H(+) = hydrogencarbonate + 2 NH4(+). The protein operates within nitrogen metabolism; urea degradation; CO(2) and NH(3) from urea (urease route): step 1/1. The sequence is that of Urease subunit gamma from Klebsiella pneumoniae.